Consider the following 258-residue polypeptide: Regulatory protein RecX (258 aa).

Belongs to the RecX family.

The protein localises to the cytoplasm. Its function is as follows. Modulates RecA activity. The sequence is that of Regulatory protein RecX from Streptococcus thermophilus (strain ATCC BAA-491 / LMD-9).